The following is a 278-amino-acid chain: MGIRKYKPTTPGRRGSSVADFVEVTRSTPEKSLVRPLHSKGGRNNAGRVTVRHQGGGHKRAYRVIDFRRHDKDGVPAKVAHIEYDPNRTARIALLHYADGEKRYILAPRNLQQGDRVENGPGADIKPGNNLALRNIPVGTTIHAIELRPGGGAKFARSAGASVQLLAKEGTMAHLRMPSGEIRLVDQRCRATVGEVGNAEQSNINWGKAGRKRWLGVRPTVRGVVMNPVDHPHGGGEGRTSGGRHPVSPWGKKEGRTRSPKKASNKYIVRRRKTNKKR.

Disordered stretches follow at residues 26–57 (RSTP…QGGG) and 225–278 (VMNP…NKKR). The span at 258 to 278 (RSPKKASNKYIVRRRKTNKKR) shows a compositional bias: basic residues.

Belongs to the universal ribosomal protein uL2 family. In terms of assembly, part of the 50S ribosomal subunit. Forms a bridge to the 30S subunit in the 70S ribosome.

Its function is as follows. One of the primary rRNA binding proteins. Required for association of the 30S and 50S subunits to form the 70S ribosome, for tRNA binding and peptide bond formation. It has been suggested to have peptidyltransferase activity; this is somewhat controversial. Makes several contacts with the 16S rRNA in the 70S ribosome. In Streptomyces coelicolor (strain ATCC BAA-471 / A3(2) / M145), this protein is Large ribosomal subunit protein uL2.